The sequence spans 465 residues: MFIYDTKLKQKVPFEPLVEKKANIYVCGPTVYDDAHLGHARSAIAFDLLRRTLELSGYEVVLVRNFTDIDDKIINKALKENKSIQELSSIYIESYTRDLNALNVKKPSLEPKASEYLDAMVGMIETLLEKNIAYQISNGDIYLDTSKDKDYGSLSVHNSSIEFGRIGLVQEKRLEQDFVLWKSYKGDNDVGFDSPLGKGRPGWHIECSSMIFKTLALTDTPYQIDIHAGGADLLFPHHENEACQTRCAFGVELAKYWMHNGFVNINNEKMSKSLGNSFFIKDALKNYDGEILRNYLLGVHYRSVLNFNEEDLLMSKKRLDKIYRLKQRVLGTLGGINPNFKKEILECMQDDLNISKALSVLESMLSSTNEKLDQNPKNKALKGEILANLKFIEELLGIGFKDPVEYFQLGVSGSEKQEIENKIEERKRAKEQKDFLKADNIREELLKQKIALMDTPQGTIWEKFF.

Residue cysteine 27 participates in Zn(2+) binding. Residues 29-39 (PTVYDDAHLGH) carry the 'HIGH' region motif. Cysteine 207, histidine 237, and glutamate 241 together coordinate Zn(2+). The short motif at 269-273 (KMSKS) is the 'KMSKS' region element. Residue lysine 272 coordinates ATP.

Belongs to the class-I aminoacyl-tRNA synthetase family. In terms of assembly, monomer. The cofactor is Zn(2+).

Its subcellular location is the cytoplasm. The catalysed reaction is tRNA(Cys) + L-cysteine + ATP = L-cysteinyl-tRNA(Cys) + AMP + diphosphate. This chain is Cysteine--tRNA ligase, found in Helicobacter pylori (strain Shi470).